The sequence spans 59 residues: MAKVKITLVKSLIGRKKDQIATVNALGLKKIGNIVEHEETPQISGMIKKVSYLLKVEEA.

The protein belongs to the universal ribosomal protein uL30 family. As to quaternary structure, part of the 50S ribosomal subunit.

This chain is Large ribosomal subunit protein uL30, found in Clostridium botulinum (strain ATCC 19397 / Type A).